Consider the following 1507-residue polypeptide: DNA-directed RNA polymerase subunit beta' (1507 aa).

Zn(2+) contacts are provided by Cys71, Cys73, Cys86, and Cys89. Mg(2+) is bound by residues Asp470, Asp472, and Asp474. Zn(2+)-binding residues include Cys800, Cys874, Cys881, and Cys884.

Belongs to the RNA polymerase beta' chain family. In terms of assembly, the RNAP catalytic core consists of 2 alpha, 1 beta, 1 beta' and 1 omega subunit. When a sigma factor is associated with the core the holoenzyme is formed, which can initiate transcription. Mg(2+) is required as a cofactor. The cofactor is Zn(2+).

The enzyme catalyses RNA(n) + a ribonucleoside 5'-triphosphate = RNA(n+1) + diphosphate. Functionally, DNA-dependent RNA polymerase catalyzes the transcription of DNA into RNA using the four ribonucleoside triphosphates as substrates. This Nitratiruptor sp. (strain SB155-2) protein is DNA-directed RNA polymerase subunit beta'.